The chain runs to 337 residues: Glyceraldehyde-3-phosphate dehydrogenase (337 aa).

NAD(+)-binding positions include 13–14 (RI), Asp-35, and Arg-80. D-glyceraldehyde 3-phosphate contacts are provided by residues 150-152 (SCT), Thr-181, 210-211 (TG), and Arg-233. Cys-151 (nucleophile) is an active-site residue. Asn-315 is a binding site for NAD(+).

The protein belongs to the glyceraldehyde-3-phosphate dehydrogenase family. Homotetramer.

It localises to the cytoplasm. The enzyme catalyses D-glyceraldehyde 3-phosphate + phosphate + NAD(+) = (2R)-3-phospho-glyceroyl phosphate + NADH + H(+). Its pathway is carbohydrate degradation; glycolysis; pyruvate from D-glyceraldehyde 3-phosphate: step 1/5. This is Glyceraldehyde-3-phosphate dehydrogenase (GPDA) from Colletotrichum lindemuthianum (Bean anthracnose fungus).